Consider the following 270-residue polypeptide: 3-methyl-2-oxobutanoate hydroxymethyltransferase (270 aa).

2 residues coordinate Mg(2+): Asp-43 and Asp-82. 3-methyl-2-oxobutanoate is bound by residues 43-44 (DS), Asp-82, and Lys-112. Mg(2+) is bound at residue Glu-114. The Proton acceptor role is filled by Glu-179.

Belongs to the PanB family. As to quaternary structure, homodecamer; pentamer of dimers. Mg(2+) serves as cofactor.

Its subcellular location is the cytoplasm. It catalyses the reaction 3-methyl-2-oxobutanoate + (6R)-5,10-methylene-5,6,7,8-tetrahydrofolate + H2O = 2-dehydropantoate + (6S)-5,6,7,8-tetrahydrofolate. It functions in the pathway cofactor biosynthesis; (R)-pantothenate biosynthesis; (R)-pantoate from 3-methyl-2-oxobutanoate: step 1/2. In terms of biological role, catalyzes the reversible reaction in which hydroxymethyl group from 5,10-methylenetetrahydrofolate is transferred onto alpha-ketoisovalerate to form ketopantoate. In Oceanobacillus iheyensis (strain DSM 14371 / CIP 107618 / JCM 11309 / KCTC 3954 / HTE831), this protein is 3-methyl-2-oxobutanoate hydroxymethyltransferase.